The primary structure comprises 238 residues: 1-(5-phosphoribosyl)-5-[(5-phosphoribosylamino)methylideneamino] imidazole-4-carboxamide isomerase (238 aa).

The active-site Proton acceptor is the D8. The Proton donor role is filled by D129.

Belongs to the HisA/HisF family.

It localises to the cytoplasm. It carries out the reaction 1-(5-phospho-beta-D-ribosyl)-5-[(5-phospho-beta-D-ribosylamino)methylideneamino]imidazole-4-carboxamide = 5-[(5-phospho-1-deoxy-D-ribulos-1-ylimino)methylamino]-1-(5-phospho-beta-D-ribosyl)imidazole-4-carboxamide. It participates in amino-acid biosynthesis; L-histidine biosynthesis; L-histidine from 5-phospho-alpha-D-ribose 1-diphosphate: step 4/9. This Brachyspira hyodysenteriae (strain ATCC 49526 / WA1) protein is 1-(5-phosphoribosyl)-5-[(5-phosphoribosylamino)methylideneamino] imidazole-4-carboxamide isomerase.